A 453-amino-acid chain; its full sequence is Trigger factor (453 aa).

The PPIase FKBP-type domain occupies 171–256 (GDRVTISFKG…ATVLEAPQES (86 aa)).

Belongs to the FKBP-type PPIase family. Tig subfamily.

The protein resides in the cytoplasm. It catalyses the reaction [protein]-peptidylproline (omega=180) = [protein]-peptidylproline (omega=0). Its function is as follows. Involved in protein export. Acts as a chaperone by maintaining the newly synthesized protein in an open conformation. Functions as a peptidyl-prolyl cis-trans isomerase. In Rhodopseudomonas palustris (strain BisB18), this protein is Trigger factor.